A 475-amino-acid polypeptide reads, in one-letter code: Ankyrin repeat, SAM and basic leucine zipper domain-containing protein 1 (475 aa).

The segment at 1–24 is disordered; sequence MAAGPLRGLAVAGGGESSESEDDG. Phosphoserine occurs at positions 17, 18, and 20. ANK repeat units follow at residues 45–74, 78–107, 110–144, 148–177, 181–210, and 214–243; these read ERQE…SVDT, YGWT…NASF, DKQT…DPNV, RLMT…EVNT, NGYT…NKMI, and DGKT…PLEG. Residues 272 to 334 enclose the SAM domain; that stretch reads SYTAFGDLEI…KIMAALKELE (63 aa).

In terms of assembly, interacts with DDX4, PIWIL1, RANBP9 and TDRD1.

It is found in the cytoplasm. In terms of biological role, plays a central role during spermatogenesis by repressing transposable elements and preventing their mobilization, which is essential for the germline integrity. Acts via the piRNA metabolic process, which mediates the repression of transposable elements during meiosis by forming complexes composed of piRNAs and Piwi proteins and governs the methylation and subsequent repression of transposons. Its association with pi-bodies suggests a participation in the primary piRNAs metabolic process. Required prior to the pachytene stage to facilitate the production of multiple types of piRNAs, including those associated with repeats involved in the regulation of retrotransposons. May act by mediating protein-protein interactions during germ cell maturation. In Ovis aries (Sheep), this protein is Ankyrin repeat, SAM and basic leucine zipper domain-containing protein 1 (ASZ1).